A 753-amino-acid chain; its full sequence is Elongin-A2 (753 aa).

The region spanning Ser-5–Asp-80 is the TFIIS N-terminal domain. Disordered stretches follow at residues Asp-80–Ser-245, Glu-261–Thr-453, and Leu-477–Phe-497. Basic and acidic residues-rich tracts occupy residues His-147–Cys-157 and Ala-271–Gly-285. Residues Lys-306 to Arg-317 show a composition bias toward basic residues. The segment covering Ser-333 to Glu-348 has biased composition (basic and acidic residues). Acidic residues predominate over residues Glu-366–Glu-377. The segment covering Asp-409–Lys-428 has biased composition (basic and acidic residues). Residues Glu-500 to Glu-659 are activation domain. Residues Thr-528–Leu-537 are BC-box. Residues Thr-528–Leu-537 are interacting with Elongin BC complex. Residues Thr-650–Val-735 are disordered. The span at Thr-654–Gly-663 shows a compositional bias: basic and acidic residues. A compositionally biased stretch (low complexity) spans Gly-680–Ser-700.

As to quaternary structure, heterotrimer of an A (ELOA, ELOA2 or ELOA3P), ELOB and ELOC subunit. Specifically expressed in testis.

It is found in the nucleus. In terms of biological role, SIII, also known as elongin, is a general transcription elongation factor that increases the RNA polymerase II transcription elongation past template-encoded arresting sites. Subunit A2 is transcriptionally active but its transcription activity is not enhanced by binding to the dimeric complex of the SIII regulatory subunits B and C (elongin BC complex). The polypeptide is Elongin-A2 (Homo sapiens (Human)).